The following is a 522-amino-acid chain: MNESPQTNEFKGTTEEAPAKESPHTSEFKGAALVSPISKSMLERLSKFEVEDAENVASYDSKIKKIVHSIVSSFAFGIFGVFLVLLDVTLLLADLIFTDSKLYIPLEYRSISLAIGLFFLMDVLLRVFVEGRQQYFSDLFNILDTAIIVIPLLVDVIYIFFDIKLLRNIPRWTHLVRLLRLIILIRIFHLLHQKRQLEKLMRRLVSENKRRYTRDGFDLDLTYVTERIIAMSFPSSGRQSFYRNPIEEVVRFLDKKHRNHYRVYNLCSERAYDPKHFHNRVSRIMIDDHNVPTLHEMVVFTKEVNEWMAQDLENIVAIHCKGGKGRTGTMVCALLIASEIFLTAEESLYYFGERRTNKTHSNKFQGVETPSQNRYVGYFAQVKHLYNWNLPPRRILFIKRFIIYSIRGDVCDLKVQVVMEKKVVFSSTSLGNCSILHDIETDKILINVYDGPPLYDDVKVQFFSSNLPKYYDNCPFFFWFNTSFIQNNRLCLPRNELDNPHKQKAWKIYPPEFAVEILFGEK.

Residues 1-11 (MNESPQTNEFK) are compositionally biased toward polar residues. Residues 1–28 (MNESPQTNEFKGTTEEAPAKESPHTSEF) form a disordered region. Over residues 12-27 (GTTEEAPAKESPHTSE) the composition is skewed to basic and acidic residues. 3 helical membrane-spanning segments follow: residues 66–86 (IVHS…LVLL), 111–131 (ISLA…FVEG), and 146–166 (AIIV…IKLL). One can recognise a Phosphatase tensin-type domain in the interval 210–386 (RRYTRDGFDL…GYFAQVKHLY (177 aa)). Residue Cys-320 is the Phosphocysteine intermediate of the active site. Residues 393-522 (RRILFIKRFI…FAVEILFGEK (130 aa)) form the C2 tensin-type domain.

Isoform 3 is expressed in testis, brain and stomach while isoform 4 seems to be testis-specific.

The protein localises to the endoplasmic reticulum membrane. It is found in the golgi apparatus membrane. It localises to the cytoplasm. It carries out the reaction a 1,2-diacyl-sn-glycero-3-phospho-(1D-myo-inositol-3,4,5-trisphosphate) + H2O = a 1,2-diacyl-sn-glycero-3-phospho-(1D-myo-inositol-4,5-bisphosphate) + phosphate. In terms of biological role, acts as a lipid phosphatase, removing the phosphate in the D3 position of the inositol ring from phosphatidylinositol 3,4,5-trisphosphate. Functionally, shows no phosphoinositide phosphatase activity. The sequence is that of Phosphatidylinositol 3,4,5-trisphosphate 3-phosphatase TPTE2 (TPTE2) from Homo sapiens (Human).